Here is a 160-residue protein sequence, read N- to C-terminus: Transcriptional repressor NrdR (160 aa).

The segment at 3 to 34 (CPFCRHADTQVVDSRVSEDGATIRRRRRCPAC) is a zinc-finger region. In terms of domain architecture, ATP-cone spans 49-139 (PSVVKKDGSR…VYRRFEDVSE (91 aa)).

It belongs to the NrdR family. Zn(2+) is required as a cofactor.

Negatively regulates transcription of bacterial ribonucleotide reductase nrd genes and operons by binding to NrdR-boxes. In Paraburkholderia phytofirmans (strain DSM 17436 / LMG 22146 / PsJN) (Burkholderia phytofirmans), this protein is Transcriptional repressor NrdR.